A 252-amino-acid chain; its full sequence is Cilia- and flagella-associated protein 300 (252 aa).

The protein belongs to the CFAP300 family.

Its subcellular location is the cytoplasm. It localises to the cytoskeleton. It is found in the cilium axoneme. Functionally, cilium- and flagellum-specific protein that plays a role in axonemal structure organization and motility. Plays a role in outer and inner axonemal dynein arm assembly. The protein is Cilia- and flagella-associated protein 300 of Paramecium tetraurelia.